The sequence spans 498 residues: ATP synthase subunit beta, chloroplastic (498 aa).

172-179 serves as a coordination point for ATP; the sequence is GGAGVGKT.

The protein belongs to the ATPase alpha/beta chains family. In terms of assembly, F-type ATPases have 2 components, CF(1) - the catalytic core - and CF(0) - the membrane proton channel. CF(1) has five subunits: alpha(3), beta(3), gamma(1), delta(1), epsilon(1). CF(0) has four main subunits: a(1), b(1), b'(1) and c(9-12).

The protein localises to the plastid. Its subcellular location is the chloroplast thylakoid membrane. The catalysed reaction is ATP + H2O + 4 H(+)(in) = ADP + phosphate + 5 H(+)(out). Produces ATP from ADP in the presence of a proton gradient across the membrane. The catalytic sites are hosted primarily by the beta subunits. The chain is ATP synthase subunit beta, chloroplastic from Licuala grandis (Ruffled fan palm).